The primary structure comprises 233 residues: Esterase FUS5 (233 aa).

Active-site charge relay system residues include S105, D159, and H187.

The protein belongs to the LovG family.

In terms of biological role, esterase; part of the gene cluster that mediates the biosynthesis of the mycotoxin fusarin C. Within the cluster, FUS1, FUS2, FUS8 and FUS9 are sufficient for fusarin production. The other FUS cluster members are not essential for fusarin C biosynthesis. The sequence is that of Esterase FUS5 from Gibberella moniliformis (strain M3125 / FGSC 7600) (Maize ear and stalk rot fungus).